The following is a 94-amino-acid chain: Small ribosomal subunit protein uS19 (94 aa).

Belongs to the universal ribosomal protein uS19 family.

Its function is as follows. Protein S19 forms a complex with S13 that binds strongly to the 16S ribosomal RNA. This chain is Small ribosomal subunit protein uS19, found in Wolbachia pipientis wMel.